We begin with the raw amino-acid sequence, 359 residues long: Isopentenyl-diphosphate delta-isomerase (359 aa).

12–13 (RK) serves as a coordination point for substrate. FMN is bound by residues serine 68, 69–71 (AMT), serine 99, and asparagine 128. Residue 99-101 (SQR) coordinates substrate. A substrate-binding site is contributed by glutamine 162. A Mg(2+)-binding site is contributed by glutamate 163. Residues lysine 194, threonine 224, 277–279 (GIR), and 298–299 (AL) each bind FMN.

It belongs to the IPP isomerase type 2 family. As to quaternary structure, homooctamer. Dimer of tetramers. It depends on FMN as a cofactor. Requires NADPH as cofactor. The cofactor is Mg(2+).

The protein localises to the cytoplasm. It catalyses the reaction isopentenyl diphosphate = dimethylallyl diphosphate. Involved in the biosynthesis of isoprenoids. Catalyzes the 1,3-allylic rearrangement of the homoallylic substrate isopentenyl (IPP) to its allylic isomer, dimethylallyl diphosphate (DMAPP). The protein is Isopentenyl-diphosphate delta-isomerase of Methanoregula boonei (strain DSM 21154 / JCM 14090 / 6A8).